The primary structure comprises 540 residues: Glucose-6-phosphate isomerase (540 aa).

E350 (proton donor) is an active-site residue. Residues H381 and K503 contribute to the active site.

It belongs to the GPI family.

The protein localises to the cytoplasm. The enzyme catalyses alpha-D-glucose 6-phosphate = beta-D-fructose 6-phosphate. It functions in the pathway carbohydrate biosynthesis; gluconeogenesis. The protein operates within carbohydrate degradation; glycolysis; D-glyceraldehyde 3-phosphate and glycerone phosphate from D-glucose: step 2/4. Catalyzes the reversible isomerization of glucose-6-phosphate to fructose-6-phosphate. The polypeptide is Glucose-6-phosphate isomerase (Burkholderia multivorans (strain ATCC 17616 / 249)).